The primary structure comprises 487 residues: NADH-quinone oxidoreductase subunit N (487 aa).

13 helical membrane-spanning segments follow: residues 7-27 (ILGP…LLMV), 38-58 (LVGL…GLGA), 79-99 (YAKA…MVWL), 111-131 (ILVL…DLIA), 164-184 (FVLG…VYGF), 207-227 (LLIG…AVPF), 238-258 (APTP…LTLF), 276-296 (VIIL…IVQT), 301-321 (LMAY…AAGT), 328-348 (VLVY…VILA), 373-393 (AAAM…AGFF), 406-426 (GLFA…FYYL), and 451-471 (VILI…SVVV).

Belongs to the complex I subunit 2 family. As to quaternary structure, NDH-1 is composed of 14 different subunits. Subunits NuoA, H, J, K, L, M, N constitute the membrane sector of the complex.

It is found in the cell inner membrane. The catalysed reaction is a quinone + NADH + 5 H(+)(in) = a quinol + NAD(+) + 4 H(+)(out). In terms of biological role, NDH-1 shuttles electrons from NADH, via FMN and iron-sulfur (Fe-S) centers, to quinones in the respiratory chain. The immediate electron acceptor for the enzyme in this species is believed to be ubiquinone. Couples the redox reaction to proton translocation (for every two electrons transferred, four hydrogen ions are translocated across the cytoplasmic membrane), and thus conserves the redox energy in a proton gradient. The polypeptide is NADH-quinone oxidoreductase subunit N (Rhodospirillum rubrum (strain ATCC 11170 / ATH 1.1.1 / DSM 467 / LMG 4362 / NCIMB 8255 / S1)).